Reading from the N-terminus, the 837-residue chain is MAGSGGPIGSGALTGGVRSKVAPSVDFDHSCSDSVEYLTLNFGPFETVHRWRRLPPCDEFVGARRSKHTVVAYKDAIYVFGGDNGKTMLNDLLRFDVKDCSWCRAFTTGTPPAPRYHHSAVVYGSSMFVFGGYTGDIYSNSNLKNKNDLFEYKFATGQWTEWKIEGRLPVARSAHGATVYSDKLWIFAGYDGNARLNDMWTIGLQDRELTCWEEVAQSGEIPPSCCNFPVAVCRDKMFVFSGQSGAKITNNLFQFEFKDKTWTRIPTEHLLRGSPPPPQRRYGHTMVAFDRHLYVFGGAADNTLPNELHCYDVDFQTWEVVQPSSDSEVGGAEMPERASSSEDASTLTSEERSSFKKSRDVFGLDFGTTSAKQPVHLASELPSGRLFHAAAVISDAMYIFGGTVDNNIRSGEMYRFQFSCYPKCTLHEDYGRLWEGRQFCDVEFVLGEKEECVQGHVAIVTARSRWLRRKIVQAQEWLAQKLEEDGALAPKEAPGPAVGRARPPLLRVAIREAEARPFEVLMQFLYTDKIKYPRKGHVEDVLLIMDVYKLALSFQLCRLEQLCRQYIEASVDLQNVLVVCESAARLQLGQLKEHCLNFIVKESHFNQVIMMKEFERLSSPLIVEIVRRKQQPPPRTPSDQPVDIGTSLIQDMKAYLEGAGSEFCDITLLLDGQPRPAHKAILAARSSYFEAMFRSFMPEDGQVNISIGEMVPSRQAFESMLRYIYYGEVNMPPEDSLYLFAAPYYYGFYNNRLQAYCKQNLEMNVTVQNVLQILEAADKTQALDMKRHCLHIIVHQFTKVSKLPTLRLLSQQLLLDIIDSLASHISDKQCAELGADI.

Position 2 is an N-acetylalanine (Ala-2). Kelch repeat units lie at residues Ala-76–Ser-125, Met-127–Asp-182, Leu-184–Asp-235, Lys-236–Tyr-282, His-292–Ala-338, and Ala-396–Gly-447. The disordered stretch occupies residues Ser-324–Arg-352. 2 consecutive BTB domains span residues Cys-440–Arg-534 and Cys-664–Pro-733.

Belongs to the LZTR1 family. As to quaternary structure, homodimer. Component of the BCR(LZTR1) E3 ubiquitin ligase complex, at least composed of CUL3, LZTR1 and RBX1. Interacts with Ras (K-Ras/KRAS, N-Ras/NRAS and H-Ras/HRAS). Interacts with RAF1. Interacts with SHOC2. Interacts with PPP1CB. In terms of processing, phosphorylated on tyrosine upon induction of apoptosis, leading to its degradation by the proteasome. Widely expressed.

The protein resides in the endomembrane system. It localises to the recycling endosome. The protein localises to the golgi apparatus. Its pathway is protein modification; protein ubiquitination. Functionally, substrate-specific adapter of a BCR (BTB-CUL3-RBX1) E3 ubiquitin-protein ligase complex that mediates ubiquitination of Ras (K-Ras/KRAS, N-Ras/NRAS and H-Ras/HRAS). Is a negative regulator of RAS-MAPK signaling that acts by controlling Ras levels and decreasing Ras association with membranes. In Mus musculus (Mouse), this protein is Leucine-zipper-like transcriptional regulator 1.